The following is a 330-amino-acid chain: GDP-mannose transporter (330 aa).

Residues 1 to 13 are Cytoplasmic-facing; sequence MSQLKVDNGPLSH. Residues 14 to 34 form a helical membrane-spanning segment; that stretch reads VANSGPISIGAYCFSSIMMTV. The Lumenal portion of the chain corresponds to 35-48; sequence TNKFVVNLKGFNMN. The chain crosses the membrane as a helical span at residues 49–69; that stretch reads FVMLFVQAAVCVNLLFFLRLL. Over 70–81 the chain is Cytoplasmic; that stretch reads GYAKFRPLNRTD. The helical transmembrane segment at 82-98 threads the bilayer; it reads AKNWFPITIFLVLMIYT. Residues 99 to 104 lie on the Lumenal side of the membrane; that stretch reads SSKSLQ. Residues 105 to 124 form a helical membrane-spanning segment; that stretch reads YLAVPIYTIFKNLTIILIAY. Residues 125-138 are Cytoplasmic-facing; the sequence is GEVLFFGGSVTAME. Residues 139–155 traverse the membrane as a helical segment; it reads LSSFLLMVLSSVVATLG. The Lumenal portion of the chain corresponds to 156–170; that stretch reads DQQALKKTADAGASL. A helical transmembrane segment spans residues 171 to 191; that stretch reads FNIGYMWMFINCLSSAAFVLV. Over 192–203 the chain is Cytoplasmic; the sequence is MRKRIKLTNFKD. Residues 204–224 form a helical membrane-spanning segment; the sequence is FDTMFYNNILSMPVLLALSFL. The Lumenal portion of the chain corresponds to 225-241; that stretch reads MEDWSTENLTKNLSRDS. Residues 242–262 traverse the membrane as a helical segment; the sequence is VTAMIISGMTAVCISYCSGWC. Topologically, residues 263 to 269 are cytoplasmic; it reads VRVTSST. The chain crosses the membrane as a helical span at residues 270-290; it reads TYSMVGALNKLPIALSGLIFF. The Lumenal portion of the chain corresponds to 291-294; it reads DAPK. The helical transmembrane segment at 295–315 threads the bilayer; that stretch reads NFLSIFSIFLGFLSGIVYAVA. Residues 316–330 lie on the Cytoplasmic side of the membrane; it reads KQKKQQNPQPSAPIK.

Belongs to the TPT transporter family. SLC35D subfamily. Homooligomer.

It is found in the golgi apparatus membrane. The protein localises to the cytoplasmic vesicle membrane. The protein resides in the endoplasmic reticulum membrane. Involved in the import of GDP-mannose from the cytoplasm into the Golgi lumen. This is GDP-mannose transporter (VRG4) from Kluyveromyces lactis (strain ATCC 8585 / CBS 2359 / DSM 70799 / NBRC 1267 / NRRL Y-1140 / WM37) (Yeast).